Here is a 64-residue protein sequence, read N- to C-terminus: Alpha-toxin Ts5 (64 aa).

Residues 2–64 (KDGYPVEGDN…KEPTKTSGRC (63 aa)) enclose the LCN-type CS-alpha/beta domain. Cystine bridges form between cysteine 12–cysteine 64, cysteine 16–cysteine 38, cysteine 24–cysteine 44, and cysteine 28–cysteine 46.

The protein belongs to the long (4 C-C) scorpion toxin superfamily. Sodium channel inhibitor family. Alpha subfamily. In terms of tissue distribution, expressed by the venom gland.

The protein localises to the secreted. Alpha toxins bind voltage-independently at site-3 of sodium channels (Nav) and inhibit the inactivation of the activated channels, thereby blocking neuronal transmission. By extending the depolarized period it indirectly affects beta-cell voltage-dependent potassium channels, thus increasing potassium permeability. This chain is Alpha-toxin Ts5, found in Tityus serrulatus (Brazilian scorpion).